Consider the following 364-residue polypeptide: MAFLQSAYLVMVFTVPIAGVILNTYVLRKLIRVARKSVVRFETTSGLPLAAMSVGDSITLCALLMQAIFHITPKGEVPTVVLSSICKFGIFLIHSTSAFSVWCWFFLSVLRYIAVFHPFKYRTIWRQPRNALKFLAGAVGMFQIYTLIFVTYRQEEKSCGEYDVFHESAFKHVHLLDIFLFYAIPSLLRITLDFLVLIHCYSPFSVEGLDRVTIDRRYAISGPATTKRFSHTGETDTLDNKAHVALAISITASTNTPSVKRIHHGNPKKKTAMVMRSILISVLNLLLNLPSHIFRAWASYDESSLENEIVRTLEPIAQMMYFSQFACNAFYLATSIYETNGSPRNTVISSSNRHVSRCISDDEA.

Met1 is a topological domain (extracellular). A helical transmembrane segment spans residues 2-22 (AFLQSAYLVMVFTVPIAGVIL). Residues 23–48 (NTYVLRKLIRVARKSVVRFETTSGLP) lie on the Cytoplasmic side of the membrane. A helical transmembrane segment spans residues 49 to 69 (LAAMSVGDSITLCALLMQAIF). Over 70-89 (HITPKGEVPTVVLSSICKFG) the chain is Extracellular. A helical transmembrane segment spans residues 90-110 (IFLIHSTSAFSVWCWFFLSVL). The Cytoplasmic segment spans residues 111-130 (RYIAVFHPFKYRTIWRQPRN). Residues 131–151 (ALKFLAGAVGMFQIYTLIFVT) form a helical membrane-spanning segment. The Extracellular segment spans residues 152–177 (YRQEEKSCGEYDVFHESAFKHVHLLD). Residues 178–198 (IFLFYAIPSLLRITLDFLVLI) form a helical membrane-spanning segment. Residues 199-277 (HCYSPFSVEG…KKKTAMVMRS (79 aa)) lie on the Cytoplasmic side of the membrane. Residues 278-298 (ILISVLNLLLNLPSHIFRAWA) form a helical membrane-spanning segment. The Extracellular portion of the chain corresponds to 299-315 (SYDESSLENEIVRTLEP). Residues 316-336 (IAQMMYFSQFACNAFYLATSI) form a helical membrane-spanning segment. At 337–364 (YETNGSPRNTVISSSNRHVSRCISDDEA) the chain is on the cytoplasmic side.

The protein belongs to the G-protein coupled receptor 1 family.

The protein localises to the cell membrane. Functionally, not known. Putative receptor. The sequence is that of Probable G-protein coupled receptor AH9.4 from Caenorhabditis elegans.